A 108-amino-acid polypeptide reads, in one-letter code: uncharacterized protein (108 aa).

Positions 1 to 24 are cleaved as a signal peptide; it reads MNLWEFRFGKSFLFIPNFIMKVLA.

This sequence to M.jannaschii MJ0803.

This is an uncharacterized protein from Methanocaldococcus jannaschii (strain ATCC 43067 / DSM 2661 / JAL-1 / JCM 10045 / NBRC 100440) (Methanococcus jannaschii).